We begin with the raw amino-acid sequence, 153 residues long: Aspartate carbamoyltransferase regulatory chain (153 aa).

Zn(2+) contacts are provided by cysteine 109, cysteine 114, cysteine 138, and cysteine 141.

It belongs to the PyrI family. Contains catalytic and regulatory chains. The cofactor is Zn(2+).

Functionally, involved in allosteric regulation of aspartate carbamoyltransferase. The protein is Aspartate carbamoyltransferase regulatory chain of Salmonella paratyphi A (strain ATCC 9150 / SARB42).